Consider the following 542-residue polypeptide: MVSLLRCPSSKPYSSLICSLTLGAVVALSGVAYAEETKPAETVPVVTPPKVISQPATKNQVRFTKTGAFDSDTVVKIAKRLAAKPYVALKDPLPAGLAKLSYDEYRDIRFNPTASIWRDQGVPFQMQMFHRGFYFQDLIEIAIVEGQNATHLAYEPKYFTAGEVITQALPNDDIGYSGFRIHNQLNTNGVFDELMVFQGASYFRALGKGNAYGLSSRGLALKTADAEGEEFPIFRAFWVERPYNDSNLIVVHALLDSPSVAGAYTFSVRPGDNTLIDVEATLFPRVELSKVGLAPSTSMFLHSLNGRHDTDDFRPEVHDSDGLLMLNGRGEHLWRPLANPRQLQVSAFSDNSPQGFGLIQRERDYASYQDLEAHYERRPSLWIEPVGNWGQGSVVLTEIPTESEIHDNIVSYWKPRQPIPAGSEFHFAYRMSWGDEPAAKVGAVHVSRSASGRADIAKATPRRLFVVDYQIEGPMTDEMPVAKVEASGGVVTNVVIARNAAKNGYRLAFELEPEDKELIELRAELKFPTPRQVETWLYRWTL.

Residues 1-34 (MVSLLRCPSSKPYSSLICSLTLGAVVALSGVAYA) form the signal peptide.

It belongs to the OpgD/OpgG family.

It is found in the periplasm. The protein operates within glycan metabolism; osmoregulated periplasmic glucan (OPG) biosynthesis. Its function is as follows. Involved in the biosynthesis of osmoregulated periplasmic glucans (OPGs). The polypeptide is Glucans biosynthesis protein G (Shewanella baltica (strain OS155 / ATCC BAA-1091)).